The following is a 328-amino-acid chain: Carbonic anhydrase-related protein 11 (328 aa).

Residues 1–23 form the signal peptide; sequence MGGAARLSAPQALVLWAALGAAA. The Alpha-carbonic anhydrase domain maps to 33-303; sequence DWWSYKENLQ…LAHRALRGNR (271 aa). N-linked (GlcNAc...) asparagine glycosylation occurs at asparagine 118. Positions 300 to 328 are disordered; it reads RGNRDPRHPERRCRGPNYRLHVDGGPHGR. The segment covering 319–328 has biased composition (basic and acidic residues); that stretch reads LHVDGGPHGR.

Belongs to the alpha-carbonic anhydrase family.

Its subcellular location is the secreted. Its function is as follows. Does not have a catalytic activity. This is Carbonic anhydrase-related protein 11 (Ca11) from Mus musculus (Mouse).